The following is a 665-amino-acid chain: DNA ligase (665 aa).

Residues 35–39 (DAIYD), 88–89 (SL), and Glu-117 each bind NAD(+). Catalysis depends on Lys-119, which acts as the N6-AMP-lysine intermediate. NAD(+) contacts are provided by Arg-140, Glu-174, Lys-290, and Lys-314. Cys-406, Cys-409, Cys-424, and Cys-429 together coordinate Zn(2+). In terms of domain architecture, BRCT spans 588 to 665 (KKTERFAQLS…EEAFNELLVS (78 aa)).

The protein belongs to the NAD-dependent DNA ligase family. LigA subfamily. Requires Mg(2+) as cofactor. It depends on Mn(2+) as a cofactor.

It carries out the reaction NAD(+) + (deoxyribonucleotide)n-3'-hydroxyl + 5'-phospho-(deoxyribonucleotide)m = (deoxyribonucleotide)n+m + AMP + beta-nicotinamide D-nucleotide.. DNA ligase that catalyzes the formation of phosphodiester linkages between 5'-phosphoryl and 3'-hydroxyl groups in double-stranded DNA using NAD as a coenzyme and as the energy source for the reaction. It is essential for DNA replication and repair of damaged DNA. The sequence is that of DNA ligase from Metamycoplasma arthritidis (strain 158L3-1) (Mycoplasma arthritidis).